The sequence spans 700 residues: Ribonucleoside-diphosphate reductase subunit alpha (700 aa).

Substrate contacts are provided by residues Thr-153, 169–170, Gly-198, 380–384, and 580–584; these read SC, NLCSE, and PTGSI. Cys-170 and Cys-409 form a disulfide bridge. Asn-380 functions as the Proton acceptor in the catalytic mechanism. The active-site Cysteine radical intermediate is Cys-382. Glu-384 functions as the Proton acceptor in the catalytic mechanism.

This sequence belongs to the ribonucleoside diphosphate reductase large chain family. In terms of assembly, tetramer of two alpha and two beta subunits.

It carries out the reaction a 2'-deoxyribonucleoside 5'-diphosphate + [thioredoxin]-disulfide + H2O = a ribonucleoside 5'-diphosphate + [thioredoxin]-dithiol. Its activity is regulated as follows. Under complex allosteric control mediated by deoxynucleoside triphosphates and ATP binding. The type of nucleotide bound at the specificity site determines substrate preference. It seems probable that ATP makes the enzyme reduce CDP and UDP, dGTP favors ADP reduction and dTTP favors GDP reduction. Provides the precursors necessary for DNA synthesis. Catalyzes the biosynthesis of deoxyribonucleotides from the corresponding ribonucleotides. The sequence is that of Ribonucleoside-diphosphate reductase subunit alpha from Bacillus subtilis (strain 168).